We begin with the raw amino-acid sequence, 341 residues long: MQNSSPTTYNPMKIISLFSGCGGLDLGFEKAGFEIPAANEYDKTIWATFKANHPKTHLIEGDIRKIKEEDFPEEIDGIIGGPPCQSWSEAGALRGIDDARGQLFFDYIRILKSKQPKFFLAENVSGMLANRHNGAVQNLLKMFDGCGYDVTLTMANAKDYGVAQERKRVFYIGFRKDLEIKFSFPKGSTVEDKDKITLKDVIWDLQDTAVPSAPQNKTNPDAVNNNEYFTGSFSPIFMSRNRVKAWDEQGFTVQASGRQCQLHPQAPKMEKHGANDYRFAAGKETLYRRMTVREVARIQGFPDNFKFIYQNVNDAYKMIGNAVPVNLAYEIAAAIKKTLER.

The region spanning 12–341 is the SAM-dependent MTase C5-type domain; sequence MKIISLFSGC…AAAIKKTLER (330 aa). Cysteine 84 is a catalytic residue.

The protein belongs to the class I-like SAM-binding methyltransferase superfamily. C5-methyltransferase family.

The catalysed reaction is a 2'-deoxycytidine in DNA + S-adenosyl-L-methionine = a 5-methyl-2'-deoxycytidine in DNA + S-adenosyl-L-homocysteine + H(+). In terms of biological role, a methylase that recognizes the double-stranded sequence 5'-GGCC-3', methylates C-3 on both strands, and protects the DNA from cleavage by the NgoPII endonuclease. This chain is Type II methyltransferase M.NgoPII (ngoPIIM), found in Neisseria gonorrhoeae.